The primary structure comprises 150 residues: Catabolic 3-dehydroquinase (150 aa).

Residue Tyr24 is the Proton acceptor of the active site. Substrate contacts are provided by Asn75, His81, and Asp88. The active-site Proton donor is His101. Substrate is bound by residues 102-103 (VS) and Arg112.

The protein belongs to the type-II 3-dehydroquinase family. In terms of assembly, homododecamer. Adopts a ring-like structure, composed of an arrangement of two hexameric rings stacked on top of one another.

The enzyme catalyses 3-dehydroquinate = 3-dehydroshikimate + H2O. The protein operates within aromatic compound metabolism; 3,4-dihydroxybenzoate biosynthesis; 3,4-dihydroxybenzoate from 3-dehydroquinate: step 1/2. Its function is as follows. Is involved in the catabolism of quinate. Allows the utilization of quinate as carbon source via the beta-ketoadipate pathway. The sequence is that of Catabolic 3-dehydroquinase from Aspergillus clavatus (strain ATCC 1007 / CBS 513.65 / DSM 816 / NCTC 3887 / NRRL 1 / QM 1276 / 107).